The sequence spans 363 residues: Cellular tumor antigen p53 (363 aa).

The transcription activation (acidic) stretch occupies residues 1 to 29; that stretch reads MEPSSETGMDPPLSQETFEDLWSLLPDPL. Residues 76 to 267 mediate DNA binding; that stretch reads DYAGKYGLQL…RTEEDNYTKK (192 aa). C150, H153, C213, and C217 together coordinate Zn(2+). Residues 248–255 are interaction with DNA; it reads RVCACPGR. The tract at residues 257 to 290 is disordered; it reads RRTEEDNYTKKRGLKPSGKRELAHPPSSEPPLPK. The Bipartite nuclear localization signal motif lies at 275 to 292; it reads KRELAHPPSSEPPLPKKR. The segment at 300–331 is oligomerization; the sequence is EEIFTLRIKGRSRYEMIKKLNDALELQESLDQ. The short motif at 314–325 is the Nuclear export signal element; the sequence is EMIKKLNDALEL. Residues 344–356 are basic (repression of DNA-binding); it reads EIKPKKGKKLLVK.

It belongs to the p53 family. In terms of assembly, binds DNA as a homotetramer. The cofactor is Zn(2+). As to expression, ubiquitous.

It is found in the cytoplasm. It localises to the nucleus. In terms of biological role, multifunctional transcription factor that induces cell cycle arrest, DNA repair or apoptosis upon binding to its target DNA sequence. Acts as a tumor suppressor in many tumor types; induces growth arrest or apoptosis depending on the physiological circumstances and cell type. Negatively regulates cell division by controlling expression of a set of genes required for this process. One of the activated genes is an inhibitor of cyclin-dependent kinases. Apoptosis induction seems to be mediated either by stimulation of BAX and FAS antigen expression, or by repression of Bcl-2 expression. This chain is Cellular tumor antigen p53 (tp53), found in Xenopus laevis (African clawed frog).